Consider the following 176-residue polypeptide: Protein Dr1 (176 aa).

At Ala-2 the chain carries N-acetylalanine. The Histone-fold domain maps to 12-75 (TIPRAAINKM…ISPEHVIQAL (64 aa)). Residues 100-103 (KRRK) carry the Nuclear localization signal motif. A phosphoserine mark is found at Ser-105, Ser-106, Ser-166, and Ser-167. A compositionally biased stretch (low complexity) spans 152-167 (QLAAASASASNQAGSS). The interval 152-176 (QLAAASASASNQAGSSQDEEDDDDI) is disordered.

It belongs to the NC2 beta/DR1 family. In terms of assembly, heterodimer with DRAP1. DR1 exists in solution as a homotetramer that dissociates during interaction with TBP and then, after complexing with TBP, reassociates at a slow rate, to reconstitute the tetramer. Interacts with NFIL3. Component of the ADA2A-containing complex (ATAC), composed of KAT14, KAT2A, TADA2L, TADA3L, ZZ3, MBIP, WDR5, YEATS2, CCDC101 and DR1. Post-translationally, phosphorylation regulates its interaction with TBP. Not phosphorylated when bound to DRAP1.

It localises to the nucleus. The association of the DR1/DRAP1 heterodimer with TBP results in a functional repression of both activated and basal transcription of class II genes. This interaction precludes the formation of a transcription-competent complex by inhibiting the association of TFIIA and/or TFIIB with TBP. Can bind to DNA on its own. Component of the ATAC complex, a complex with histone acetyltransferase activity on histones H3 and H4. This chain is Protein Dr1 (DR1), found in Homo sapiens (Human).